Here is a 481-residue protein sequence, read N- to C-terminus: NADH-quinone oxidoreductase subunit N (481 aa).

Transmembrane regions (helical) follow at residues 11 to 31 (ALPE…DLWA), 38 to 58 (WTHY…LAVW), 74 to 94 (GMSR…FVYA), 103 to 123 (IFKG…SVMV), 128 to 148 (FLTA…LIAL), 163 to 183 (FVLG…VYGA), 208 to 228 (LGLV…PFHM), 241 to 261 (VTAL…FRIL), 272 to 292 (WSLM…LAAI), 300 to 322 (MLAY…GAVG), 332 to 352 (TYAL…DGDN), 368 to 388 (VWLA…PPLM), 404 to 424 (GYVW…FYYL), and 450 to 470 (SLLS…QTVI).

The protein belongs to the complex I subunit 2 family. As to quaternary structure, NDH-1 is composed of 14 different subunits. Subunits NuoA, H, J, K, L, M, N constitute the membrane sector of the complex.

It localises to the cell inner membrane. It catalyses the reaction a quinone + NADH + 5 H(+)(in) = a quinol + NAD(+) + 4 H(+)(out). In terms of biological role, NDH-1 shuttles electrons from NADH, via FMN and iron-sulfur (Fe-S) centers, to quinones in the respiratory chain. The immediate electron acceptor for the enzyme in this species is believed to be ubiquinone. Couples the redox reaction to proton translocation (for every two electrons transferred, four hydrogen ions are translocated across the cytoplasmic membrane), and thus conserves the redox energy in a proton gradient. The sequence is that of NADH-quinone oxidoreductase subunit N from Neisseria gonorrhoeae (strain ATCC 700825 / FA 1090).